The primary structure comprises 89 residues: Large ribosomal subunit protein eL34 (89 aa).

Residues 41-69 are disordered; sequence RPLNGVPRGRPSELRKLPKTAKRPERPYP. Residues 50–66 are compositionally biased toward basic and acidic residues; that stretch reads RPSELRKLPKTAKRPER.

This sequence belongs to the eukaryotic ribosomal protein eL34 family.

The chain is Large ribosomal subunit protein eL34 from Thermococcus gammatolerans (strain DSM 15229 / JCM 11827 / EJ3).